The chain runs to 42 residues: Photosystem I reaction center subunit IX (42 aa).

A helical transmembrane segment spans residues Phe-7–Ile-27.

This sequence belongs to the PsaJ family.

The protein localises to the cellular thylakoid membrane. Functionally, may help in the organization of the PsaE and PsaF subunits. The protein is Photosystem I reaction center subunit IX of Microcystis aeruginosa (strain NIES-843 / IAM M-2473).